Reading from the N-terminus, the 664-residue chain is UvrABC system protein B (664 aa).

The 158-residue stretch at 23-180 folds into the Helicase ATP-binding domain; it reads EGLNRGMRFQ…EKLAKIGYQR (158 aa). 36–43 contributes to the ATP binding site; sequence GVTGSGKT. The short motif at 89–112 is the Beta-hairpin element; that stretch reads YYDYYQPEAYIPTKDLYIEKNADI. The Helicase C-terminal domain occupies 426-588; that stretch reads QVDDLINEIV…ITPRSIVKPL (163 aa). In terms of domain architecture, UVR spans 622–657; it reads EEYVALLEEEMYRAASELRYEDAAALRDELFRVKET.

This sequence belongs to the UvrB family. In terms of assembly, forms a heterotetramer with UvrA during the search for lesions. Interacts with UvrC in an incision complex.

It is found in the cytoplasm. Its function is as follows. The UvrABC repair system catalyzes the recognition and processing of DNA lesions. A damage recognition complex composed of 2 UvrA and 2 UvrB subunits scans DNA for abnormalities. Upon binding of the UvrA(2)B(2) complex to a putative damaged site, the DNA wraps around one UvrB monomer. DNA wrap is dependent on ATP binding by UvrB and probably causes local melting of the DNA helix, facilitating insertion of UvrB beta-hairpin between the DNA strands. Then UvrB probes one DNA strand for the presence of a lesion. If a lesion is found the UvrA subunits dissociate and the UvrB-DNA preincision complex is formed. This complex is subsequently bound by UvrC and the second UvrB is released. If no lesion is found, the DNA wraps around the other UvrB subunit that will check the other stand for damage. This chain is UvrABC system protein B, found in Thermotoga neapolitana (strain ATCC 49049 / DSM 4359 / NBRC 107923 / NS-E).